Reading from the N-terminus, the 439-residue chain is L-cysteine:1D-myo-inositol 2-amino-2-deoxy-alpha-D-glucopyranoside ligase 2 (439 aa).

Residue Cys60 coordinates Zn(2+). Residues 60–63 (CGIT), Thr75, and 98–100 (NVT) contribute to the L-cysteinyl-5'-AMP site. Residues 62–72 (ITPYDSTHLGH) carry the 'HIGH' region motif. The 'ERGGDP' region motif lies at 203-208 (ERGGDP). Trp243 is an L-cysteinyl-5'-AMP binding site. Cys247 is a binding site for Zn(2+). L-cysteinyl-5'-AMP is bound at residue 265–267 (GVD). His272 provides a ligand contact to Zn(2+). Residue Ile299 participates in L-cysteinyl-5'-AMP binding. Residues 305 to 309 (KMSKS) carry the 'KMSKS' region motif.

It belongs to the class-I aminoacyl-tRNA synthetase family. MshC subfamily. Monomer. Zn(2+) is required as a cofactor.

It carries out the reaction 1D-myo-inositol 2-amino-2-deoxy-alpha-D-glucopyranoside + L-cysteine + ATP = 1D-myo-inositol 2-(L-cysteinylamino)-2-deoxy-alpha-D-glucopyranoside + AMP + diphosphate + H(+). Catalyzes the ATP-dependent condensation of GlcN-Ins and L-cysteine to form L-Cys-GlcN-Ins. The protein is L-cysteine:1D-myo-inositol 2-amino-2-deoxy-alpha-D-glucopyranoside ligase 2 of Corynebacterium urealyticum (strain ATCC 43042 / DSM 7109).